The following is a 105-amino-acid chain: Nitrogen fixation nifHD1 region GlnB-like protein 1 (105 aa).

Belongs to the P(II) protein family.

Its function is as follows. Could be involved in the regulation of nitrogen fixation. The chain is Nitrogen fixation nifHD1 region GlnB-like protein 1 (glnBA) from Methanosarcina barkeri.